A 229-amino-acid chain; its full sequence is Uracil-DNA glycosylase (229 aa).

Asp67 functions as the Proton acceptor in the catalytic mechanism.

The protein belongs to the uracil-DNA glycosylase (UDG) superfamily. UNG family.

It localises to the cytoplasm. It carries out the reaction Hydrolyzes single-stranded DNA or mismatched double-stranded DNA and polynucleotides, releasing free uracil.. Its function is as follows. Excises uracil residues from the DNA which can arise as a result of misincorporation of dUMP residues by DNA polymerase or due to deamination of cytosine. The chain is Uracil-DNA glycosylase from Coxiella burnetii (strain CbuK_Q154) (Coxiella burnetii (strain Q154)).